The primary structure comprises 312 residues: Cytochrome f (312 aa).

Residues 1–28 form the signal peptide; sequence MQISKFFKFVFISVSLCGSLLFPQMANA. Heme contacts are provided by Y29, C49, C52, and H53. Residues 278–298 form a helical membrane-spanning segment; that stretch reads VKGMIAFFFTVTVAQILLVLK.

This sequence belongs to the cytochrome f family. In terms of assembly, the 4 large subunits of the cytochrome b6-f complex are cytochrome b6, subunit IV (17 kDa polypeptide, petD), cytochrome f and the Rieske protein, while the 4 small subunits are PetG, PetL, PetM and PetN. The complex functions as a dimer. Heme serves as cofactor.

It is found in the plastid. The protein resides in the chloroplast thylakoid membrane. Its function is as follows. Component of the cytochrome b6-f complex, which mediates electron transfer between photosystem II (PSII) and photosystem I (PSI), cyclic electron flow around PSI, and state transitions. This chain is Cytochrome f, found in Emiliania huxleyi (Coccolithophore).